We begin with the raw amino-acid sequence, 505 residues long: ATP synthase subunit beta (505 aa).

157–164 (GGAGVGKT) contributes to the ATP binding site.

The protein belongs to the ATPase alpha/beta chains family. As to quaternary structure, F-type ATPases have 2 components, CF(1) - the catalytic core - and CF(0) - the membrane proton channel. CF(1) has five subunits: alpha(3), beta(3), gamma(1), delta(1), epsilon(1). CF(0) has three main subunits: a(1), b(2) and c(9-12). The alpha and beta chains form an alternating ring which encloses part of the gamma chain. CF(1) is attached to CF(0) by a central stalk formed by the gamma and epsilon chains, while a peripheral stalk is formed by the delta and b chains.

It localises to the cell inner membrane. It catalyses the reaction ATP + H2O + 4 H(+)(in) = ADP + phosphate + 5 H(+)(out). In terms of biological role, produces ATP from ADP in the presence of a proton gradient across the membrane. The catalytic sites are hosted primarily by the beta subunits. The sequence is that of ATP synthase subunit beta from Bacteroides thetaiotaomicron (strain ATCC 29148 / DSM 2079 / JCM 5827 / CCUG 10774 / NCTC 10582 / VPI-5482 / E50).